Here is a 365-residue protein sequence, read N- to C-terminus: Phosphatidylcholine:ceramide cholinephosphotransferase 4 (365 aa).

The Cytoplasmic portion of the chain corresponds to M1 to Q44. A helical transmembrane segment spans residues V45 to I65. The Lumenal segment spans residues T66–G92. The helical transmembrane segment at M93–F113 threads the bilayer. Residues K114–R165 lie on the Cytoplasmic side of the membrane. Residues F166–L186 form a helical membrane-spanning segment. Residues P187–T229 lie on the Lumenal side of the membrane. H228 is a catalytic residue. The chain crosses the membrane as a helical span at residues V230–F250. Residue R251 is a topological domain, cytoplasmic. A helical transmembrane segment spans residues P252–Y272. Residues H271 and D275 contribute to the active site. The Lumenal portion of the chain corresponds to T273–D275. A helical membrane pass occupies residues V276–G296. Topologically, residues A297 to V365 are cytoplasmic.

Belongs to the sphingomyelin synthase family.

The protein localises to the golgi apparatus membrane. It catalyses the reaction an N-acylsphing-4-enine + a 1,2-diacyl-sn-glycero-3-phosphocholine = a sphingomyelin + a 1,2-diacyl-sn-glycerol. The catalysed reaction is an N-acylsphinganine + a 1,2-diacyl-sn-glycero-3-phosphocholine = an N-acylsphinganine-1-phosphocholine + a 1,2-diacyl-sn-glycerol. It carries out the reaction an N-acylsphing-4-enine + a 1,2-diacyl-sn-glycero-3-phosphoethanolamine = an N-acylsphing-4-enine 1-phosphoethanolamine + a 1,2-diacyl-sn-glycerol. The enzyme catalyses an N-acylsphinganine + a 1,2-diacyl-sn-glycero-3-phosphoethanolamine = an N-acylsphinganine-1-phosphoethanolamine + a 1,2-diacyl-sn-glycerol. It catalyses the reaction a 1,2-diacyl-sn-glycero-3-phospho-(1D-myo-inositol) + an N-acylsphing-4-enine = an N-acylsphing-4-enine-(1D-myo-inositol) + a 1,2-diacyl-sn-glycerol. The catalysed reaction is an N-acylsphinganine + a 1,2-diacyl-sn-glycero-3-phospho-(1D-myo-inositol) = an N-acylsphinganine-(1D-myo-inositol) + a 1,2-diacyl-sn-glycerol. Functionally, bifunctional sphingomyelin (SM)/ethanolamine phosphorylceramide (EPC) synthase with minimal inositol phosphorylceramide (IPC) synthase activity. Specificity is likely to be defined by residues in the lumenal catalytic domain that interact with the polar head groups of the phospholipid donors. SM is synthesized by both stages of the parasite life cycle, bloodstream forms (BSF) and procyclic forms (PCF), by transferring the phosphoryl headgroup from a 1,2-diacyl-sn-glycero-3-phosphocholine to an N-acylsphing-4-enine (ceramide) or an N-acylsphinganine (dihydroceramide) with release of 1,2-diacyl-sn-glycerol. Also catalyzes the reverse reaction, production of ceramide from sphingomyelin. EPC is synthesized by transferring phosphoethanolamine from a 1,2-diacyl-sn-glycero-3-phosphoethanolamine to ceramide or dihydroceramide by BSF and PCF, while IPC is confined to PCF. The ceramide/dihydroceramide ratios are skewed towards dihydroceramide in PCF parasites and ceramide in BSF parasites, this is likely due to differential expression and/or regulation of dihydroceramide desaturase, the enzyme responsible for converting dihydroceramide to ceramide. This is Phosphatidylcholine:ceramide cholinephosphotransferase 4 from Trypanosoma brucei brucei.